Consider the following 178-residue polypeptide: CDP-archaeol synthase (178 aa).

A run of 5 helical transmembrane segments spans residues Ile3–Thr23, Thr55–Leu75, Gly91–Ile111, Ile125–Val145, and Met149–Tyr169.

The protein belongs to the CDP-archaeol synthase family. Requires Mg(2+) as cofactor.

It is found in the cell membrane. It catalyses the reaction 2,3-bis-O-(geranylgeranyl)-sn-glycerol 1-phosphate + CTP + H(+) = CDP-2,3-bis-O-(geranylgeranyl)-sn-glycerol + diphosphate. It participates in membrane lipid metabolism; glycerophospholipid metabolism. Catalyzes the formation of CDP-2,3-bis-(O-geranylgeranyl)-sn-glycerol (CDP-archaeol) from 2,3-bis-(O-geranylgeranyl)-sn-glycerol 1-phosphate (DGGGP) and CTP. This reaction is the third ether-bond-formation step in the biosynthesis of archaeal membrane lipids. The protein is CDP-archaeol synthase of Methanococcus aeolicus (strain ATCC BAA-1280 / DSM 17508 / OCM 812 / Nankai-3).